The primary structure comprises 1240 residues: MIENWPKKPEGSQWTDDQWKAVVANGRDILVAAAAGSGKTAVLVERIIKKIINEENPVDVDRLLVVTFTNAAAQEMKNRIGEALEKVLIDEPGSQHVRKQLSLLNKASISTIHSFCLQVIRGYYYMLDVDPRFRIANQTENELLKEEVLDDILEEEYGIEDNTIFFELVDRYTSDRSDDDLQRMILALHTESRAHPNPEKWLDKLVEAYDVEGKTIEDLVYASYLLEDVKFQLETAEQHIRKATELAMLPDGPAPRIETLQADLALFGTLSAAARESWTSVYEAMQNVSWQTLKRIKKSDYNEDIVKQVDSLRNKAKDEVKKLQEELFSRRPESFLRDFQDMHPVLEKLVQLVKVFTERFQAMKRDKGMVDFTDLEHFCLQILSEQSEDGEMKPSAVALQYRNKFAEVLVDEYQDTNFVQESIIKFVTKDSESEGNLFMVGDVKQSIYRFRLAEPGLFLGKYKRFTQEGLGGGMKIDLAKNFRSRHEVLAGTNFIFKQIMGEEVGEIDYDADAELKLGASYPEGEDVAAELLCIQQTEEVIDGEEGAEVEKAQLEARLMAQRIKAMVDSGYEVYDRKTDSMRPVQYRDFVILLRSMPWAPQIMEELKLQGIPVYADLATGYFEATEVNIMMNVFRVIDNPMQDIPLAAVLRSPIVGLNDEELATLRAHGKKGSFYEVMSSFLKGAPLEEEKELHDKLEWFYNLLQGWREFARQQSLSDLIWKVYGETGYYDFVGGLPAGKQRQANLRVLYDRARQYEATSFRGLFRFLRFIERILERGDDMGTARALGEQEDVVRIMTIHKSKGLEFPVVFVAGLGRRFNTQDLMKRFLLHKDFGFGSQFIDPRKRIKYTTLSQLAIKRKMKMELIAEEMRVLYVALTRAKEKLILIGTVKDATKEMEKWLDAREHSEWLLPDHVRAGASCYLDWIAPSLYRHRDSEMLLELGQGSIPDEIYGYDTSWKVEVVDGNTLLAPEPVQEEKQELLEALREKKAVPLESERKEEVYDRLMWKYRYGEATSHRAKQSVTEIKRNYQSEEGSDNAFIKKLRAPIRTRPRFMEKKGLTYAERGTAVHAVMQHVDLKKPITVEVLQEQIAGMVNKELLTFEQAEEIAVEKVISFFDSDLGKRVLAAKSVEREVPFTMMLAAEEAYQDWQGKSGESILVQGVIDCMIEEEDGITLIDFKTDTIEGKFPGGFEQAKPILEERYKVQLSLYAKALEKSLQHPVKEKCLYFFDGNHVIKVEE.

Residues 12–485 form the UvrD-like helicase ATP-binding domain; the sequence is SQWTDDQWKA…IDLAKNFRSR (474 aa). 33-40 contacts ATP; the sequence is AAAGSGKT. One can recognise a UvrD-like helicase C-terminal domain in the interval 497–804; it reads KQIMGEEVGE…RIMTIHKSKG (308 aa).

It belongs to the helicase family. AddA subfamily. As to quaternary structure, heterodimer of AddA and AddB/RexB. It depends on Mg(2+) as a cofactor.

It carries out the reaction Couples ATP hydrolysis with the unwinding of duplex DNA by translocating in the 3'-5' direction.. It catalyses the reaction ATP + H2O = ADP + phosphate + H(+). Functionally, the heterodimer acts as both an ATP-dependent DNA helicase and an ATP-dependent, dual-direction single-stranded exonuclease. Recognizes the chi site generating a DNA molecule suitable for the initiation of homologous recombination. The AddA nuclease domain is required for chi fragment generation; this subunit has the helicase and 3' -&gt; 5' nuclease activities. In Bacillus cereus (strain AH820), this protein is ATP-dependent helicase/nuclease subunit A.